The sequence spans 397 residues: Succinyl-diaminopimelate desuccinylase (397 aa).

Zn(2+) is bound at residue His73. Asp75 is a catalytic residue. Asp106 contacts Zn(2+). Catalysis depends on Glu140, which acts as the Proton acceptor. Positions 141, 169, and 366 each coordinate Zn(2+).

The protein belongs to the peptidase M20A family. DapE subfamily. As to quaternary structure, homodimer. It depends on Zn(2+) as a cofactor. The cofactor is Co(2+).

It carries out the reaction N-succinyl-(2S,6S)-2,6-diaminopimelate + H2O = (2S,6S)-2,6-diaminopimelate + succinate. It participates in amino-acid biosynthesis; L-lysine biosynthesis via DAP pathway; LL-2,6-diaminopimelate from (S)-tetrahydrodipicolinate (succinylase route): step 3/3. In terms of biological role, catalyzes the hydrolysis of N-succinyl-L,L-diaminopimelic acid (SDAP), forming succinate and LL-2,6-diaminopimelate (DAP), an intermediate involved in the bacterial biosynthesis of lysine and meso-diaminopimelic acid, an essential component of bacterial cell walls. The chain is Succinyl-diaminopimelate desuccinylase from Rhizobium etli (strain ATCC 51251 / DSM 11541 / JCM 21823 / NBRC 15573 / CFN 42).